The primary structure comprises 253 residues: Acetylglutamate kinase (253 aa).

Substrate contacts are provided by residues 40–41 (GG), Arg62, and Asn154.

Belongs to the acetylglutamate kinase family. ArgB subfamily.

Its subcellular location is the cytoplasm. It carries out the reaction N-acetyl-L-glutamate + ATP = N-acetyl-L-glutamyl 5-phosphate + ADP. Its pathway is amino-acid biosynthesis; L-arginine biosynthesis; N(2)-acetyl-L-ornithine from L-glutamate: step 2/4. Catalyzes the ATP-dependent phosphorylation of N-acetyl-L-glutamate. This Staphylococcus saprophyticus subsp. saprophyticus (strain ATCC 15305 / DSM 20229 / NCIMB 8711 / NCTC 7292 / S-41) protein is Acetylglutamate kinase.